The sequence spans 1897 residues: MSGYPAGHYEDGYGHQEHGGDAYYQDEHGQAYYDPNDYGDSYYDRGNYYNAEGGQAYGQEGGYYDAGHQDDYYGDQYYDQGNGAPRGRRRGDSEEDSETFSDFTMRSETARAADMDYYGRGDERYNSYADSQYAGRGYNGYRPPSSQVSYGANRSSGASTPVYGMDYGSALPGGPRSREPYPAWASDGQVPVSKEEIEDIFIDLVNKFGFQRDSMRNMYDHLMTQLDSRASRMTPNQALLSLHADYIGGDNANYRRWYFAAHLDLDDAVGFANMKLGKADRKTRKARKAAKAAAQQNPENVEENLEAMEGDNSLEAAVYRWKSRMNRMSPHDRVRQLALYMLCWGEANQVRYMPECICFIFKCADDYYSSPECQSRVEPVEEFTYLNEIITPLYQFCRDQGYEILDGKYVRRERDHEKIIGYDDMNQLFWYPEGIERISFEDKTRLVDVPPAERWTKLKDVDWKKAFFKTYRETRSWFHMITNFNRIWVIHLGAFWFFTAYNAPTLYTKNYQQQLDNKPAGSKYWSAVGFGGALVGLIQILATLCEWMYVPRRWAGAQHLSKRLMFLIAVFIVNLAPGVVVFGFNNVLSETICLIIGIVHFFIALATFFFFSVMPLGGLFGSYLKKHGRQYVASQTFTASYPRLNGNDMWMSYGLWICVFGAKLVESYFFLTLSLKDPMRILSPMRIHQCAGVTYIPNSLCHAQPQILLGLMMFMDLTLFFLDSYLWYVICNTIFSVARSFYLGVSIWSPWRNIFSRLPKRIYSKVLATTDMEIKYKPKVLISQVWNAIIISMYREHLLAIDHVQKLLYHQVPSEQEGKRTLRAPTFFVSQEDQSFKTEFFPAGSEAERRISFFAQSVATPMPEPLPVDNMPTFTVLIPHYGEKILLSLREIIREDEPYSRVTLLEYLKQLHPHEWDCFVKDTKILADETSQLNGEPEKNEKDAQKSKIDDLPFYCIGFKSAAPEYTLRTRIWSSLRSQTLYRTISGFMNYSRAIKLLYRVENPEVVQMFGGNSEKLERELERMARRKFKICVSMQRYAKFNKEERENTEFLLRAYPDLQIAYLDEEPPANEGEEPRLYSALIDGHCELLDNGMRKPKFRIQLSGNPILGDGKSDNQNHSIIFYRGEYIQVIDANQDNYLEECLKIRSVLAEFEELTTDNVSPYTPGIATEAETPVAILGAREYIFSENVGVLGDVAASKEQTFGTLFARTLAQIGGKLHYGHPDFLNGIFMTTRGGISKAQKGLHLNEDIYAGMTALCRGGRIKHCEYFQCGKGRDLGFGSILNFTTKIGTGMGEQMLSREYYYLGTQLPLDRFLSFYYAHPGFHLNNMFIMLSVQMFMIVLINLGALKHETITCRYNSNLPITDPLRPTYCADLTPIIAWVNRCVVSIFIVFFISFVPLAVQELTERGLWRMATRLAKHFGSFSFMFEVFVCQIYANAVHQNLSFGGARYIGTGRGFATARIPFGVLYSRFAGPSIYAGSRLLLMLLFATSTVWTPALIWFWVSLLALCISPFLFNPHQFAWHDFFIDYRDYIRWLSRGNSRSHASSWIAFCRLSRTRLTGYKRKLLGVPSEKGSGDVPRAKFTNIFFSEIIAPLVQVAVTLVPYLYINSRTGISNDNERASNAVVRIAIVAFGPIGVNAGVSGMFFGMACCMGPIFGMCCKKFGAVLAAIAHAIAVIILLVIFEVMFFLESWSWPRMVLGMISAAAIQRFIYKLIISLALTREFKHDQSNIAWWTGKWYNMGWHSLSQPGREFLCKITELGYFSADFVLGHILLFVMLPALCIPYVDKFHSVILFWLRPSRQIRPPIYSLKQSKLRKRRVVRFAILYFTMLVLFLILLIAPLVARDEGISVNLNIMSLMQPLDTDNNDTISSYTGNGLPVGYSAWTPSAASASA.

Residues 1-106 (MSGYPAGHYE…SETFSDFTMR (106 aa)) form a disordered region. Over residues 8–29 (HYEDGYGHQEHGGDAYYQDEHG) the composition is skewed to basic and acidic residues. Positions 74–83 (GDQYYDQGNG) are enriched in low complexity. The next 17 helical transmembrane spans lie at 487–507 (IWVI…PTLY), 525–545 (WSAV…ATLC), 564–584 (LMFL…VFGF), 591–611 (TICL…FFFF), 655–675 (LWIC…TLSL), 707–727 (ILLG…SYLW), 728–748 (YVIC…VSIW), 1329–1349 (NMFI…LGAL), 1386–1406 (CVVS…VQEL), 1473–1493 (FAGP…FATS), 1497–1517 (TPAL…PFLF), 1588–1608 (IFFS…VPYL), 1630–1650 (IAIV…MFFG), 1666–1686 (FGAV…LVIF), 1701–1721 (VLGM…IISL), 1766–1786 (FSAD…ALCI), and 1826–1846 (FAIL…APLV).

It belongs to the glycosyltransferase 48 family. In terms of assembly, component of the 1,3-beta-glucan synthase (GS) complex composed of a catalytic subunit fksA and a regulatory subunit.

It localises to the mitochondrion. The protein resides in the cell membrane. The enzyme catalyses [(1-&gt;3)-beta-D-glucosyl](n) + UDP-alpha-D-glucose = [(1-&gt;3)-beta-D-glucosyl](n+1) + UDP + H(+). In terms of biological role, catalytic subunit of the 1,3-beta-glucan synthase. Synthesizes 1,3-beta-glucan, a major structural component of the fungal cell wall. Involved in cell wall synthesis, maintenance and remodeling. In Aspergillus niger (strain ATCC MYA-4892 / CBS 513.88 / FGSC A1513), this protein is 1,3-beta-glucan synthase component FKS1.